The following is an 876-amino-acid chain: Leucine--tRNA ligase (876 aa).

Residues proline 43–histidine 53 carry the 'HIGH' region motif. The 'KMSKS' region signature appears at lysine 632–serine 636. Lysine 635 provides a ligand contact to ATP.

This sequence belongs to the class-I aminoacyl-tRNA synthetase family.

The protein resides in the cytoplasm. It catalyses the reaction tRNA(Leu) + L-leucine + ATP = L-leucyl-tRNA(Leu) + AMP + diphosphate. This Agrobacterium fabrum (strain C58 / ATCC 33970) (Agrobacterium tumefaciens (strain C58)) protein is Leucine--tRNA ligase.